A 238-amino-acid polypeptide reads, in one-letter code: uncharacterized protein (238 aa).

This is an uncharacterized protein from Mycobacterium tuberculosis (strain ATCC 25618 / H37Rv).